Here is a 90-residue protein sequence, read N- to C-terminus: Probable Fe(2+)-trafficking protein (90 aa).

Belongs to the Fe(2+)-trafficking protein family.

Could be a mediator in iron transactions between iron acquisition and iron-requiring processes, such as synthesis and/or repair of Fe-S clusters in biosynthetic enzymes. The chain is Probable Fe(2+)-trafficking protein from Acidovorax ebreus (strain TPSY) (Diaphorobacter sp. (strain TPSY)).